The chain runs to 438 residues: MGGCAGSRRRLLDSEEEETAPEPRPPRSYHKGALWKNVMGFWLLGLCNNFSYVVMLSAAHDILSHQRASGNQSHVDPDPPPTAHNSSSRFDCNSVSTAAVLLADILPTLIIKLLAPLGLHLLPYSPRVLVSGICAAGSFILVAFSHSVGTSLCGVVLASISSGVGEVTFLSLTAFYPRAVISWWSSGTGGAGLMGALSYLGLTQAGLSPQHTLLSMLGIPALMLASYFFLLTSPEPQDPGGEEEAETSARQPLIDSETPESKPDSSSNLSLQERWTVFKGLLWYIVPLVLVYFAEYFINQGLFELLFFRNTSLNHAQQYRWYQMLYQAGVFVSRSSLHCCRIRFTWVLALLQCLNLAFLLVDVWFSFLPSIYLVFLIILYEGLLGGAAYVNTFHNIALETSDQHREFAMAAACISDTLGISLSGLLALPLHDFLCHLS.

The tract at residues 1-29 (MGGCAGSRRRLLDSEEEETAPEPRPPRSY) is disordered. Topologically, residues 1–37 (MGGCAGSRRRLLDSEEEETAPEPRPPRSYHKGALWKN) are cytoplasmic. At S14 the chain carries Phosphoserine. A helical membrane pass occupies residues 38 to 58 (VMGFWLLGLCNNFSYVVMLSA). Residues 59–127 (AHDILSHQRA…GLHLLPYSPR (69 aa)) are Lumenal-facing. The interval 68 to 89 (ASGNQSHVDPDPPPTAHNSSSR) is disordered. N-linked (GlcNAc...) asparagine glycans are attached at residues N71 and N85. A helical transmembrane segment spans residues 128–148 (VLVSGICAAGSFILVAFSHSV). The Cytoplasmic portion of the chain corresponds to 149–151 (GTS). A helical membrane pass occupies residues 152–172 (LCGVVLASISSGVGEVTFLSL). At 173–182 (TAFYPRAVIS) the chain is on the lumenal side. A helical transmembrane segment spans residues 183–203 (WWSSGTGGAGLMGALSYLGLT). Over 204-277 (QAGLSPQHTL…NLSLQERWTV (74 aa)) the chain is Cytoplasmic. The segment at 236-267 (PQDPGGEEEAETSARQPLIDSETPESKPDSSS) is disordered. The short motif at 242–244 (EEE) is the Lysosomal targeting motif element. A Lysosomal targeting motif. Required for AP1G1, AP2A2 and AP3D1 interaction motif is present at residues 253–254 (LI). A helical membrane pass occupies residues 278–298 (FKGLLWYIVPLVLVYFAEYFI). The Lumenal segment spans residues 299–346 (NQGLFELLFFRNTSLNHAQQYRWYQMLYQAGVFVSRSSLHCCRIRFTW). N310 is a glycosylation site (N-linked (GlcNAc...) asparagine). Residues 347–367 (VLALLQCLNLAFLLVDVWFSF) traverse the membrane as a helical segment. Over 368–438 (LPSIYLVFLI…PLHDFLCHLS (71 aa)) the chain is Cytoplasmic. Residues 409 to 419 (MAAACISDTLG) carry the Lysosomal targeting motif motif. C435 carries the post-translational modification Cysteine methyl ester. Residue C435 is the site of S-farnesyl cysteine attachment. Positions 436 to 438 (HLS) are cleaved as a propeptide — removed in mature form.

This sequence belongs to the battenin family. In terms of assembly, interacts with DCTN1, KIF3A, RAB7A and RILP. Interacts with CLN5. Post-translationally, highly glycosylated. In terms of processing, farnesylation is important for trafficking to lysosomes.

The protein resides in the lysosome membrane. It is found in the late endosome. Its subcellular location is the lysosome. Functionally, mediates microtubule-dependent, anterograde transport connecting the Golgi network, endosomes, autophagosomes, lysosomes and plasma membrane, and participates in several cellular processes such as regulation of lysosomal pH, lysosome protein degradation, receptor-mediated endocytosis, autophagy, transport of proteins and lipids from the TGN, apoptosis and synaptic transmission. Facilitates the proteins transport from trans-Golgi network (TGN)-to other membrane compartments such as transport of microdomain-associated proteins to the plasma membrane, IGF2R transport to the lysosome where it regulates the CTSD release leading to regulation of CTSD maturation and thereby APP intracellular processing. Moreover regulates CTSD activity in response to osmotic stress. Also binds galactosylceramide and transports it from the trans Golgi to the rafts, which may have immediate and downstream effects on cell survival by modulating ceramide synthesis. At the plasma membrane, regulates actin-dependent events including filopodia formation, cell migration, and pinocytosis through ARF1-CDC42 pathway and also the cytoskeleton organization through interaction with MYH10 and fodrin leading to the regulation of the plasma membrane association of Na+, K+ ATPase complex. Regulates synaptic transmission in the amygdala, hippocampus, and cerebellum through regulation of synaptic vesicles density and their proximity to active zones leading to modulation of short-term plasticity and age-dependent anxious behavior, learning and memory. Regulates autophagic vacuoles (AVs) maturation by modulating the trafficking between endocytic and autophagolysosomal/lysosomal compartments, which involves vesicle fusion leading to regulation of degradation process. Also participates in cellular homeostasis of compounds such as, water, ions, amino acids, proteins and lipids in several tissue namely in brain and kidney through regulation of their transport and synthesis. The sequence is that of Battenin from Canis lupus familiaris (Dog).